Here is a 328-residue protein sequence, read N- to C-terminus: MKWYPWLIKPYKKIIRLHERKKAHHAILIKTQKGMGVFKLVWFISKWLLCLKPKGTNFCDNCHGCKLMSANNHPDWHTIINEKNDVFDVDSIRVINEKIFKRAQQGNNKIIFLPNVHKLTESAVNALLKILEEPPEKNWFFLIDYNYLKLHSTLKSRCFLYRLPLPLEKESLNWLKNNNKKDNISNLTSLRINQDSPISAKNFIESDLWDERKNLYKSLSHSIKDKNLLKILPVLCKKNTIMKIDWICLLLFDAVKTNFNERKKLINCDQIKLINFFSKKYNNILLNKSIRKWTKCRYILSSVSSINSELLLLEQLLLWEKILCFITP.

In terms of assembly, DNA polymerase III contains a core (composed of alpha, epsilon and theta chains) that associates with a tau subunit. This core dimerizes to form the POLIII' complex. PolIII' associates with the gamma complex (composed of gamma, delta, delta', psi and chi chains) and with the beta chain to form the complete DNA polymerase III complex.

It carries out the reaction DNA(n) + a 2'-deoxyribonucleoside 5'-triphosphate = DNA(n+1) + diphosphate. Functionally, DNA polymerase III is a complex, multichain enzyme responsible for most of the replicative synthesis in bacteria. This DNA polymerase also exhibits 3' to 5' exonuclease activity. The chain is DNA polymerase III subunit delta' (holB) from Buchnera aphidicola subsp. Schizaphis graminum (strain Sg).